The following is a 308-amino-acid chain: Olfactory receptor 4N5 (308 aa).

The Extracellular segment spans residues 1–25 (METQNLTVVTEFILLGLTQSQDAQL). An N-linked (GlcNAc...) asparagine glycan is attached at N5. A helical membrane pass occupies residues 26 to 49 (LVFVLVLIFYLIILPGNFLIIFTI). The Cytoplasmic portion of the chain corresponds to 50-57 (KSDPGLTA). The helical transmembrane segment at 58-79 (PLYFFLGNLALLDASYSFIVVP) threads the bilayer. At 80 to 100 (RMLVDFLSEKKVISYRSCITQ) the chain is on the extracellular side. A disulfide bridge links C97 with C189. A helical transmembrane segment spans residues 101–120 (LFFLHFLGAGEMFLLVVMAF). The Cytoplasmic portion of the chain corresponds to 121-139 (DRYIAICRPLHYSTIMNPR). Residues 140 to 158 (ACYALSLVLWLGGFIHSIV) form a helical membrane-spanning segment. Residues 159-195 (QVALILHLPFCGPNQLDNFFCDVPQVIKLACTNTFVV) lie on the Extracellular side of the membrane. The chain crosses the membrane as a helical span at residues 196 to 219 (ELLMVSNSGLLSLLCFLGLLASYA). Over 220–235 (VILCRIREHSSEGKSK) the chain is Cytoplasmic. The chain crosses the membrane as a helical span at residues 236-258 (AISTCTTHIIIIFLMFGPAIFIY). Topologically, residues 259 to 269 (TCPFQAFPADK) are extracellular. The chain crosses the membrane as a helical span at residues 270-289 (VVSLFHTVIFPLMNPVIYTL). Residues 290 to 308 (RNQEVKASMRKLLSQHMFC) are Cytoplasmic-facing.

Belongs to the G-protein coupled receptor 1 family.

It is found in the cell membrane. In terms of biological role, odorant receptor. This Homo sapiens (Human) protein is Olfactory receptor 4N5 (OR4N5).